The primary structure comprises 212 residues: HTH-type transcriptional repressor KstR (212 aa).

A compositionally biased stretch (low complexity) spans 1–11; the sequence is MTTSSRSRSST. The segment at 1–28 is disordered; it reads MTTSSRSRSSTVAAATLGEDDLSSNAQK. The region spanning 28-88 is the HTH tetR-type domain; sequence KERRKRILDA…SALAREFERI (61 aa). The segment at residues 51-70 is a DNA-binding region (H-T-H motif); that stretch reads QMRAVAERADVAVGTLYRYF.

In terms of assembly, homodimer.

Its function is as follows. Controls the expression of genes used for utilizing diverse lipids as energy sources. This Rhodococcus jostii (strain RHA1) protein is HTH-type transcriptional repressor KstR (kstR).